A 277-amino-acid chain; its full sequence is Histone-lysine N-methyltransferase set-17 (277 aa).

The region spanning 135-246 (FRIEESKLPN…INQELLVWYG (112 aa)) is the SET domain. Tyr245 contacts S-adenosyl-L-methionine.

The protein belongs to the class V-like SAM-binding methyltransferase superfamily. As to expression, expressed in the germline. Predominantly expressed in primary spermatocytes. Also expressed in the oocyte-producing germline of hermaphrodites.

It is found in the nucleus. The enzyme catalyses N(6)-methyl-L-lysyl(4)-[histone H3] + S-adenosyl-L-methionine = N(6),N(6)-dimethyl-L-lysyl(4)-[histone H3] + S-adenosyl-L-homocysteine + H(+). It carries out the reaction L-lysyl(4)-[histone H3] + S-adenosyl-L-methionine = N(6)-methyl-L-lysyl(4)-[histone H3] + S-adenosyl-L-homocysteine + H(+). Histone methyltransferase that specifically mono- and di-methylates 'Lys-4' of histone H3 in vitro. Does not tri-methylate 'Lys-4' of histone H3 in vitro. Promotes spermatid development and fertility by positively regulating the transcription of spermatocyte-specific genes in primary spermatocytes. Together with spr-5, required for transgenerational fertility. This is Histone-lysine N-methyltransferase set-17 from Caenorhabditis elegans.